The sequence spans 138 residues: Putative pre-16S rRNA nuclease (138 aa).

The protein belongs to the YqgF nuclease family.

The protein localises to the cytoplasm. Functionally, could be a nuclease involved in processing of the 5'-end of pre-16S rRNA. In Polaromonas sp. (strain JS666 / ATCC BAA-500), this protein is Putative pre-16S rRNA nuclease.